The sequence spans 339 residues: MKKTIKNSTHRPEDILVHAIKKRRSASGDVKNAVKLKEGEDYLRVEEEIPHDDNVVVIDDGCDHDHDVDDNDDDEEENGRYCRREFDHGYHLVKGQMGHGMEDFIVADTKTVKGHNLGLYAIFDGHSGSDVADYLQNHLFDNILSQPDFWRNPKKAIKRAYKSTDDYILQNVVGPRGGSTAVTAIVIDGKKIVVANVGDSRAILCRESDVVKQITVDHEPDKERDLVKSKGGFVSQKPGNVPRVDGQLAMTRAFGDGGLKEHISVIPNIEIAEIHDDTKFLILASDGLWKVMSNDEVWDQIKKRGNAEEAAKMLIDKALARGSKDDISCVVVSFLQWID.

One can recognise a PPM-type phosphatase domain in the interval 87–334 (DHGYHLVKGQ…DDISCVVVSF (248 aa)). Mn(2+) contacts are provided by D124, G125, D286, and D325.

Belongs to the PP2C family. Mg(2+) is required as a cofactor. Mn(2+) serves as cofactor.

The catalysed reaction is O-phospho-L-seryl-[protein] + H2O = L-seryl-[protein] + phosphate. It carries out the reaction O-phospho-L-threonyl-[protein] + H2O = L-threonyl-[protein] + phosphate. This chain is Probable protein phosphatase 2C 28, found in Arabidopsis thaliana (Mouse-ear cress).